A 736-amino-acid polypeptide reads, in one-letter code: Copper-exporting P-type ATPase (736 aa).

The span at 1 to 17 shows a compositional bias: basic residues; it reads MKHDHHQGHTHSGKGHA. The disordered stretch occupies residues 1–32; that stretch reads MKHDHHQGHTHSGKGHACHHEHNSPKTQQASS. 6 helical membrane-spanning segments follow: residues 85–105, 114–134, 149–169, 183–203, 341–361, and 369–389; these read FWIALMLTIPVVILEMGGHGL, SSWIQLLLATPVVLWGGWPFF, FTLIAMGIGVAWIYSMVAVLW, VVAVYFEAAAVITTLVLLGQV, GWFVPAVILVAVLSFIVWALL, and YGLIAAVSVLIIACPCALGLA. Residue D426 is the 4-aspartylphosphate intermediate of the active site. Mg(2+)-binding residues include D426, T428, and D624. Helical transmembrane passes span 682–702 and 706–726; these read LFFAFIYNVLGVPLAAGVLYP and LLLSPMIAAAAMALSSVSVII.

Belongs to the cation transport ATPase (P-type) (TC 3.A.3) family. Type IB subfamily. Mg(2+) is required as a cofactor.

Its subcellular location is the cell inner membrane. It catalyses the reaction Cu(+)(in) + ATP + H2O = Cu(+)(out) + ADP + phosphate + H(+). Activated by phospholipids, Mg(2+) and Cu(+). In terms of biological role, couples the hydrolysis of ATP with the export of copper. This Legionella pneumophila subsp. pneumophila (strain Philadelphia 1 / ATCC 33152 / DSM 7513) protein is Copper-exporting P-type ATPase.